Here is a 338-residue protein sequence, read N- to C-terminus: Putative pectinesterase 63 (338 aa).

The signal sequence occupies residues 1-24; it reads MGYNYVSLIVTILLVVITSPVVFG. Substrate-binding residues include Thr116 and Gln151. Asp174 (proton donor) is an active-site residue. Asp195 serves as the catalytic Nucleophile. Residue Arg252 coordinates substrate.

Belongs to the pectinesterase family.

The protein resides in the secreted. It is found in the cell wall. The enzyme catalyses [(1-&gt;4)-alpha-D-galacturonosyl methyl ester](n) + n H2O = [(1-&gt;4)-alpha-D-galacturonosyl](n) + n methanol + n H(+). Its pathway is glycan metabolism; pectin degradation; 2-dehydro-3-deoxy-D-gluconate from pectin: step 1/5. Its function is as follows. Acts in the modification of cell walls via demethylesterification of cell wall pectin. In Arabidopsis thaliana (Mouse-ear cress), this protein is Putative pectinesterase 63 (PME63).